Reading from the N-terminus, the 396-residue chain is Acetylornithine aminotransferase 2 (396 aa).

Residues 102 to 103 (GA) and F134 each bind pyridoxal 5'-phosphate. R137 provides a ligand contact to N(2)-acetyl-L-ornithine. A pyridoxal 5'-phosphate-binding site is contributed by 219–222 (DEVQ). K248 carries the post-translational modification N6-(pyridoxal phosphate)lysine. Pyridoxal 5'-phosphate is bound at residue T276.

The protein belongs to the class-III pyridoxal-phosphate-dependent aminotransferase family. ArgD subfamily. Homodimer. Pyridoxal 5'-phosphate serves as cofactor.

It is found in the cytoplasm. The enzyme catalyses N(2)-acetyl-L-ornithine + 2-oxoglutarate = N-acetyl-L-glutamate 5-semialdehyde + L-glutamate. The protein operates within amino-acid biosynthesis; L-arginine biosynthesis; N(2)-acetyl-L-ornithine from L-glutamate: step 4/4. The protein is Acetylornithine aminotransferase 2 of Bordetella parapertussis (strain 12822 / ATCC BAA-587 / NCTC 13253).